The sequence spans 1235 residues: Structural maintenance of chromosomes protein 1B (1235 aa).

32–39 (GPNGSGKS) lines the ATP pocket. Residues 156–490 (EEISTSGELI…RSELQNAGID (335 aa)) are a coiled coil. The region spanning 514-629 (SVFGRLFDLC…ETMEEARHIA (116 aa)) is the SMC hinge domain. An N6-acetyllysine mark is found at Lys648 and Lys713. Coiled-coil stretches lie at residues 666–934 (WDEK…LDCK), 970–994 (EKEE…SDQE), and 1022–1049 (RALE…KEAR). Lys1033 is modified (N6-acetyllysine).

This sequence belongs to the SMC family. SMC1 subfamily. In terms of assembly, forms a heterodimer with SMC3. Component of a meiosis-specific cohesin complex, probably composed of the SMC1B and SMC3 heterodimer attached via their SMC hinge domain, RAD21 (or its meiosis-specific related protein REC8), which link them, and STAG3, which interacts with RAD21 or REC8. The cohesin complex interacts with the cohesin loading complex subunits NIPBL/Scc2 (via HEAT repeats) and MAU2/Scc4. NIPBL directly contacts all members of the complex, RAD21, SMC1A/B, SMC3 and STAG1.

It localises to the nucleus. The protein resides in the chromosome. It is found in the centromere. In terms of biological role, meiosis-specific component of cohesin complex. Required for the maintenance of meiotic cohesion, but not, or only to a minor extent, for its establishment. Contributes to axial element (AE) formation and the organization of chromatin loops along the AE. Plays a key role in synapsis, recombination and chromosome movements. The cohesin complex is required for the cohesion of sister chromatids after DNA replication. The cohesin complex apparently forms a large proteinaceous ring within which sister chromatids can be trapped. At anaphase, the complex is cleaved and dissociates from chromatin, allowing sister chromatids to segregate. The meiosis-specific cohesin complex probably replaces mitosis specific cohesin complex when it dissociates from chromatin during prophase I. In Homo sapiens (Human), this protein is Structural maintenance of chromosomes protein 1B (SMC1B).